Reading from the N-terminus, the 1184-residue chain is DNA-directed RNA polymerase subunit beta' (1184 aa).

Zn(2+)-binding residues include C60, C62, C75, and C78. Positions 449, 451, and 453 each coordinate Mg(2+). Zn(2+)-binding residues include C794, C867, C874, and C877.

Belongs to the RNA polymerase beta' chain family. The RNAP catalytic core consists of 2 alpha, 1 beta, 1 beta' and 1 omega subunit. When a sigma factor is associated with the core the holoenzyme is formed, which can initiate transcription. Requires Mg(2+) as cofactor. Zn(2+) serves as cofactor.

The catalysed reaction is RNA(n) + a ribonucleoside 5'-triphosphate = RNA(n+1) + diphosphate. DNA-dependent RNA polymerase catalyzes the transcription of DNA into RNA using the four ribonucleoside triphosphates as substrates. This is DNA-directed RNA polymerase subunit beta' from Thermoanaerobacter sp. (strain X514).